The sequence spans 130 residues: Histone H2A type 1-K (130 aa).

Positions 1–22 (MSGRGKQGGKARAKAKTRSSRA) are disordered. At S2 the chain carries N-acetylserine. A Phosphoserine; by RPS6KA5 modification is found at S2. Position 4 is a citrulline; alternate (R4). Residue R4 is modified to Symmetric dimethylarginine; by PRMT5; alternate. K6 and K10 each carry N6-(2-hydroxyisobutyryl)lysine; alternate. K6 is modified (N6-(beta-hydroxybutyryl)lysine; alternate). N6-acetyllysine; alternate is present on residues K6 and K10. Positions 7 to 19 (QGGKARAKAKTRS) are enriched in basic residues. Position 10 is an N6-lactoyllysine; alternate (K10). K10 carries the post-translational modification N6-succinyllysine; alternate. Glycyl lysine isopeptide (Lys-Gly) (interchain with G-Cter in ubiquitin) cross-links involve residues K14 and K16. The residue at position 37 (K37) is an N6-(2-hydroxyisobutyryl)lysine; alternate. K37 carries the N6-(beta-hydroxybutyryl)lysine; alternate modification. K37 bears the N6-crotonyllysine; alternate mark. 2 positions are modified to N6-(2-hydroxyisobutyryl)lysine: K75 and K76. N6-(2-hydroxyisobutyryl)lysine; alternate is present on K96. At K96 the chain carries N6-succinyllysine; alternate. K96 is modified (N6-glutaryllysine; alternate). Position 105 is an N5-methylglutamine (Q105). Position 119 is an N6-(2-hydroxyisobutyryl)lysine; alternate (K119). 2 positions are modified to N6-crotonyllysine; alternate: K119 and K120. An N6-glutaryllysine; alternate mark is found at K119 and K120. K120 is modified (N6-(beta-hydroxybutyryl)lysine; alternate). K120 is covalently cross-linked (Glycyl lysine isopeptide (Lys-Gly) (interchain with G-Cter in ubiquitin); alternate). At T121 the chain carries Phosphothreonine; by DCAF1. Residue K126 is modified to N6-(beta-hydroxybutyryl)lysine; alternate. An N6-crotonyllysine; alternate modification is found at K126. N6-glutaryllysine; alternate is present on K126.

Belongs to the histone H2A family. In terms of assembly, the nucleosome is a histone octamer containing two molecules each of H2A, H2B, H3 and H4 assembled in one H3-H4 heterotetramer and two H2A-H2B heterodimers. The octamer wraps approximately 147 bp of DNA. Post-translationally, deiminated on Arg-4 in granulocytes upon calcium entry. In terms of processing, monoubiquitination of Lys-120 (H2AK119Ub) by RING1, TRIM37 and RNF2/RING2 complex gives a specific tag for epigenetic transcriptional repression and participates in X chromosome inactivation of female mammals. It is involved in the initiation of both imprinted and random X inactivation. Ubiquitinated H2A is enriched in inactive X chromosome chromatin. Ubiquitination of H2A functions downstream of methylation of 'Lys-27' of histone H3 (H3K27me). H2AK119Ub by RNF2/RING2 can also be induced by ultraviolet and may be involved in DNA repair. Following DNA double-strand breaks (DSBs), it is ubiquitinated through 'Lys-63' linkage of ubiquitin moieties by the E2 ligase UBE2N and the E3 ligases RNF8 and RNF168, leading to the recruitment of repair proteins to sites of DNA damage. Ubiquitination at Lys-14 and Lys-16 (H2AK13Ub and H2AK15Ub, respectively) in response to DNA damage is initiated by RNF168 that mediates monoubiquitination at these 2 sites, and 'Lys-63'-linked ubiquitin are then conjugated to monoubiquitin; RNF8 is able to extend 'Lys-63'-linked ubiquitin chains in vitro. Deubiquitinated by USP51 at Lys-14 and Lys-16 (H2AK13Ub and H2AK15Ub, respectively) after damaged DNA is repaired. H2AK119Ub and ionizing radiation-induced 'Lys-63'-linked ubiquitination (H2AK13Ub and H2AK15Ub) are distinct events. Phosphorylation on Ser-2 (H2AS1ph) is enhanced during mitosis. Phosphorylation on Ser-2 by RPS6KA5/MSK1 directly represses transcription. Acetylation of H3 inhibits Ser-2 phosphorylation by RPS6KA5/MSK1. Phosphorylation at Thr-121 (H2AT120ph) by DCAF1 is present in the regulatory region of many tumor suppresor genes and down-regulates their transcription. Post-translationally, symmetric dimethylation on Arg-4 by the PRDM1/PRMT5 complex may play a crucial role in the germ-cell lineage. In terms of processing, glutamine methylation at Gln-105 (H2AQ104me) by FBL is specifically dedicated to polymerase I. It is present at 35S ribosomal DNA locus and impairs binding of the FACT complex. Crotonylation (Kcr) is specifically present in male germ cells and marks testis-specific genes in post-meiotic cells, including X-linked genes that escape sex chromosome inactivation in haploid cells. Crotonylation marks active promoters and enhancers and confers resistance to transcriptional repressors. It is also associated with post-meiotically activated genes on autosomes. Post-translationally, hydroxybutyrylation of histones is induced by starvation. In terms of processing, lactylated in macrophages by EP300/P300 by using lactoyl-CoA directly derived from endogenous or exogenous lactate, leading to stimulates gene transcription.

Its subcellular location is the nucleus. It is found in the chromosome. Core component of nucleosome. Nucleosomes wrap and compact DNA into chromatin, limiting DNA accessibility to the cellular machineries which require DNA as a template. Histones thereby play a central role in transcription regulation, DNA repair, DNA replication and chromosomal stability. DNA accessibility is regulated via a complex set of post-translational modifications of histones, also called histone code, and nucleosome remodeling. The protein is Histone H2A type 1-K of Mus musculus (Mouse).